We begin with the raw amino-acid sequence, 556 residues long: 2-isopropylmalate synthase (556 aa).

In terms of domain architecture, Pyruvate carboxyltransferase spans 33–307 (PIWCSSDLRD…HPQLDFSDID (275 aa)). Asp42, His246, His248, and Asn282 together coordinate Mg(2+). Residues 439–556 (ATSPYVLASH…AVTQAEAKAA (118 aa)) are regulatory domain.

Belongs to the alpha-IPM synthase/homocitrate synthase family. LeuA type 2 subfamily. In terms of assembly, homodimer. Requires Mg(2+) as cofactor.

The protein resides in the cytoplasm. It catalyses the reaction 3-methyl-2-oxobutanoate + acetyl-CoA + H2O = (2S)-2-isopropylmalate + CoA + H(+). The protein operates within amino-acid biosynthesis; L-leucine biosynthesis; L-leucine from 3-methyl-2-oxobutanoate: step 1/4. Its function is as follows. Catalyzes the condensation of the acetyl group of acetyl-CoA with 3-methyl-2-oxobutanoate (2-ketoisovalerate) to form 3-carboxy-3-hydroxy-4-methylpentanoate (2-isopropylmalate). In Pseudomonas aeruginosa (strain ATCC 15692 / DSM 22644 / CIP 104116 / JCM 14847 / LMG 12228 / 1C / PRS 101 / PAO1), this protein is 2-isopropylmalate synthase.